Consider the following 289-residue polypeptide: LBH domain-containing protein 1 (289 aa).

2 disordered regions span residues 1-36 (MALVPGRSKEDGLWTRNSPGSSQHPESPRLPNPLWD) and 205-289 (EGAE…ASQD). The region spanning 1-128 (MALVPGRSKE…AEAFFQDQSE (128 aa)) is the LBH domain. Residues 15-25 (TRNSPGSSQHP) are compositionally biased toward polar residues.

As to expression, expressed in bladder cancer tissues (at protein level).

This chain is LBH domain-containing protein 1, found in Homo sapiens (Human).